A 347-amino-acid chain; its full sequence is Anthranilate phosphoribosyltransferase (347 aa).

5-phospho-alpha-D-ribose 1-diphosphate contacts are provided by residues G88, 91–92, T96, 98–101, 116–124, and S128; these read GD, NIST, and KHGNRSVSS. Anthranilate is bound at residue G88. S100 lines the Mg(2+) pocket. N119 serves as a coordination point for anthranilate. R174 is a binding site for anthranilate. Residues D232 and E233 each contribute to the Mg(2+) site.

It belongs to the anthranilate phosphoribosyltransferase family. As to quaternary structure, homodimer. Requires Mg(2+) as cofactor.

The catalysed reaction is N-(5-phospho-beta-D-ribosyl)anthranilate + diphosphate = 5-phospho-alpha-D-ribose 1-diphosphate + anthranilate. It functions in the pathway amino-acid biosynthesis; L-tryptophan biosynthesis; L-tryptophan from chorismate: step 2/5. In terms of biological role, catalyzes the transfer of the phosphoribosyl group of 5-phosphorylribose-1-pyrophosphate (PRPP) to anthranilate to yield N-(5'-phosphoribosyl)-anthranilate (PRA). This chain is Anthranilate phosphoribosyltransferase, found in Shewanella sp. (strain MR-4).